Consider the following 318-residue polypeptide: MTVKPELNEITPYLQFNRQEWGNFRKDTPLTLTESDLDKLQGQIEIVSLKEVTEIYLPLSRLLSFYVTARQTLQQATYQFLGKPEPKVPYIIGIAGSVAVGKSTTSRVLKALLSRWPDHPNVEVITTDGFLYSNAKLEKQGLMKRKGFPESYDMPSLLRVLNAIKSGQRNVRIPVYSHHYYDIVRGQYEIVDQPDIVILEGLNILQTGVRKTLQQLQVFVSDFFDFSLFVDAQAQVIQKWYIDRVLSFWRTTFKDPHSYFHYLTQMSETEAAAFAKHVWNEINKVNLMENILPYKNRAQLILEKAADHSIQKVYLRKI.

An ATP-binding site is contributed by 96-103 (GSVAVGKS).

Belongs to the prokaryotic pantothenate kinase family.

The protein resides in the cytoplasm. The catalysed reaction is (R)-pantothenate + ATP = (R)-4'-phosphopantothenate + ADP + H(+). Its pathway is cofactor biosynthesis; coenzyme A biosynthesis; CoA from (R)-pantothenate: step 1/5. The chain is Pantothenate kinase from Coxiella burnetii (strain Dugway 5J108-111).